Reading from the N-terminus, the 925-residue chain is Leucine--tRNA ligase (925 aa).

Residues 40–51 carry the 'HIGH' region motif; it reads PYPSGAGLHVGH. The short motif at 700–704 is the 'KMSKS' region element; that stretch reads KMSKS. K703 is a binding site for ATP.

The protein belongs to the class-I aminoacyl-tRNA synthetase family.

It is found in the cytoplasm. It carries out the reaction tRNA(Leu) + L-leucine + ATP = L-leucyl-tRNA(Leu) + AMP + diphosphate. The sequence is that of Leucine--tRNA ligase from Porphyromonas gingivalis (strain ATCC 33277 / DSM 20709 / CIP 103683 / JCM 12257 / NCTC 11834 / 2561).